A 430-amino-acid chain; its full sequence is 3-phosphoshikimate 1-carboxyvinyltransferase (430 aa).

Lysine 33, serine 34, and arginine 38 together coordinate 3-phosphoshikimate. Lysine 33 is a binding site for phosphoenolpyruvate. Phosphoenolpyruvate-binding residues include glycine 101 and arginine 129. Residues serine 172, serine 173, glutamine 174, serine 201, glutamate 319, and histidine 346 each contribute to the 3-phosphoshikimate site. Glutamine 174 provides a ligand contact to phosphoenolpyruvate. The active-site Proton acceptor is glutamate 319. Phosphoenolpyruvate is bound by residues arginine 350, arginine 391, and lysine 416.

The protein belongs to the EPSP synthase family. As to quaternary structure, monomer.

Its subcellular location is the cytoplasm. It catalyses the reaction 3-phosphoshikimate + phosphoenolpyruvate = 5-O-(1-carboxyvinyl)-3-phosphoshikimate + phosphate. The protein operates within metabolic intermediate biosynthesis; chorismate biosynthesis; chorismate from D-erythrose 4-phosphate and phosphoenolpyruvate: step 6/7. In terms of biological role, catalyzes the transfer of the enolpyruvyl moiety of phosphoenolpyruvate (PEP) to the 5-hydroxyl of shikimate-3-phosphate (S3P) to produce enolpyruvyl shikimate-3-phosphate and inorganic phosphate. This is 3-phosphoshikimate 1-carboxyvinyltransferase from Corynebacterium glutamicum (strain R).